A 610-amino-acid chain; its full sequence is Protein Spindly-B (610 aa).

The stretch at 1–392 (MEESETVLKL…IDKVKDELSL (392 aa)) forms a coiled coil. The segment at 474–610 (TEAHGVSDAT…KPATAQCPQQ (137 aa)) is disordered. Composition is skewed to basic and acidic residues over residues 493-511 (SDDKKLPKEDLSLSTKDQD) and 535-548 (RIMEDEKDTPDLNK). The segment covering 549-561 (RNPNNCTITSIHP) has biased composition (polar residues). The segment covering 570-583 (SELKKVDEEQEKRK) has biased composition (basic and acidic residues).

It belongs to the Spindly family.

The protein resides in the chromosome. It is found in the centromere. Its subcellular location is the kinetochore. In terms of biological role, required for the localization of dynein and dynactin to the mitotic kintochore. Dynein is believed to control the initial lateral interaction between the kinetochore and spindle microtubules and to facilitate the subsequent formation of end-on kinetochore-microtubule attachments mediated by the NDC80 complex. The protein is Protein Spindly-B (spdl1-b) of Xenopus laevis (African clawed frog).